Consider the following 190-residue polypeptide: MSGLRPALSTFIFLLLITGGVYPLLTTVLGQWWFPWQANGSLIREGDTVRGSALIGQNFTGNGYFHGRPSATAEMPYNPQASGGSNLAVSNPELDKLIAARVAALRAANPDASASVPVELVTASASGLDNNITPQAAAWQIPRVAKARNLSVEQLTQLIAKYSQQPLVKYIGQPVVNIVELNLALDKLDE.

Residues 10 to 30 form a helical membrane-spanning segment; that stretch reads TFIFLLLITGGVYPLLTTVLG.

Belongs to the KdpC family. As to quaternary structure, the system is composed of three essential subunits: KdpA, KdpB and KdpC.

The protein localises to the cell inner membrane. Its function is as follows. Part of the high-affinity ATP-driven potassium transport (or Kdp) system, which catalyzes the hydrolysis of ATP coupled with the electrogenic transport of potassium into the cytoplasm. This subunit acts as a catalytic chaperone that increases the ATP-binding affinity of the ATP-hydrolyzing subunit KdpB by the formation of a transient KdpB/KdpC/ATP ternary complex. The sequence is that of Potassium-transporting ATPase KdpC subunit from Escherichia coli (strain K12 / MC4100 / BW2952).